Here is a 542-residue protein sequence, read N- to C-terminus: CTP synthase (542 aa).

The tract at residues 1 to 266 (MATNYIFVTG…DDLICQRFRL (266 aa)) is amidoligase domain. Residue Ser-14 participates in CTP binding. Ser-14 is a UTP binding site. Residues 15 to 20 (SLGKGI) and Asp-72 contribute to the ATP site. Mg(2+) is bound by residues Asp-72 and Glu-140. Residues 147-149 (DIE), 187-192 (KTKPTQ), and Lys-223 contribute to the CTP site. UTP contacts are provided by residues 187-192 (KTKPTQ) and Lys-223. 239–241 (KDV) contacts ATP. The 252-residue stretch at 291–542 (TIGMVGKYVE…VKAAKENQKK (252 aa)) folds into the Glutamine amidotransferase type-1 domain. Gly-352 is an L-glutamine binding site. Cys-379 acts as the Nucleophile; for glutamine hydrolysis in catalysis. L-glutamine-binding positions include 380–383 (LGMQ), Glu-403, and Arg-470. Active-site residues include His-515 and Glu-517.

The protein belongs to the CTP synthase family. Homotetramer.

It carries out the reaction UTP + L-glutamine + ATP + H2O = CTP + L-glutamate + ADP + phosphate + 2 H(+). The enzyme catalyses L-glutamine + H2O = L-glutamate + NH4(+). It catalyses the reaction UTP + NH4(+) + ATP = CTP + ADP + phosphate + 2 H(+). Its pathway is pyrimidine metabolism; CTP biosynthesis via de novo pathway; CTP from UDP: step 2/2. Its activity is regulated as follows. Allosterically activated by GTP, when glutamine is the substrate; GTP has no effect on the reaction when ammonia is the substrate. The allosteric effector GTP functions by stabilizing the protein conformation that binds the tetrahedral intermediate(s) formed during glutamine hydrolysis. Inhibited by the product CTP, via allosteric rather than competitive inhibition. In terms of biological role, catalyzes the ATP-dependent amination of UTP to CTP with either L-glutamine or ammonia as the source of nitrogen. Regulates intracellular CTP levels through interactions with the four ribonucleotide triphosphates. This chain is CTP synthase, found in Mannheimia succiniciproducens (strain KCTC 0769BP / MBEL55E).